Reading from the N-terminus, the 125-residue chain is Ribosome-binding factor A (125 aa).

It belongs to the RbfA family. In terms of assembly, monomer. Binds 30S ribosomal subunits, but not 50S ribosomal subunits or 70S ribosomes.

The protein resides in the cytoplasm. Its function is as follows. One of several proteins that assist in the late maturation steps of the functional core of the 30S ribosomal subunit. Associates with free 30S ribosomal subunits (but not with 30S subunits that are part of 70S ribosomes or polysomes). Required for efficient processing of 16S rRNA. May interact with the 5'-terminal helix region of 16S rRNA. The polypeptide is Ribosome-binding factor A (Chloroherpeton thalassium (strain ATCC 35110 / GB-78)).